A 561-amino-acid chain; its full sequence is DNA ligase B (561 aa).

Catalysis depends on Lys-125, which acts as the N6-AMP-lysine intermediate.

The protein belongs to the NAD-dependent DNA ligase family. LigB subfamily.

It catalyses the reaction NAD(+) + (deoxyribonucleotide)n-3'-hydroxyl + 5'-phospho-(deoxyribonucleotide)m = (deoxyribonucleotide)n+m + AMP + beta-nicotinamide D-nucleotide.. Functionally, catalyzes the formation of phosphodiester linkages between 5'-phosphoryl and 3'-hydroxyl groups in double-stranded DNA using NAD as a coenzyme and as the energy source for the reaction. The chain is DNA ligase B from Salmonella enteritidis PT4 (strain P125109).